Here is a 238-residue protein sequence, read N- to C-terminus: Putative ABC transporter ATP-binding protein AF_1841 (238 aa).

An ABC transporter domain is found at 8–238 (IEADSVSYDY…EELLEKAGVI (231 aa)). 41–48 (GANGSGKS) lines the ATP pocket.

This sequence belongs to the ABC transporter superfamily.

Its subcellular location is the cell membrane. Functionally, probably part of an ABC transporter complex. Responsible for energy coupling to the transport system. This Archaeoglobus fulgidus (strain ATCC 49558 / DSM 4304 / JCM 9628 / NBRC 100126 / VC-16) protein is Putative ABC transporter ATP-binding protein AF_1841.